The following is a 677-amino-acid chain: MGTVPAGSRRAPGCGEGMFILCLALLLAPGAPAQYSVDDFGGLGRMFDGIGAISGGGATSRLLVNYPEPQRTEILDYLFKPNFGASLHIFKVEIGGDAQTTDGTEPSHMHYPDDQNYFRGYEWWLMKEAKKRNPAIKLIGLPWAFPGWIGYGKNWPYDFPDVTAYYVVSWIIGAKQYHNLDIDYIGIWNERAYDIKYIKVLRHTLDRLGLTNVGIIAADGDWGIAHDVLIDPYLNEAVQVIGAHYPGTHAAQDAIQTGKTLWASEDYSTYNDEVGGGCWARILNQNYVNGNMTSTISWNMVASYYEQLPFGLEGLMTAKEPWSGNYVVSTPIWITAHTTQFTQPGWYYLRTVGHLDKGGSYVALTDRLGNLTVIIETMSHNNSICIRPPLPEYNVSAQNATFYLQGSFQNLQELQVWYSNLDINNTKPVTFKKLTPVKVQNGSFTLQLGVNEVYTVTTLLTGQKGSFPDPPKSKPFPLKYKDDFSVRNPPFSEAPYFADQSGVFEYFTNTSDPGDHVFTFRQVLTQRPITWASDANQAISVIGNYQWSNITVTCDIYIETVETGGVFVAARVDQGGSPTDRAKGIFFWVFADGTYKVTGDLIGEIVLCKGLAGVRARSWHTLTLHVDGTNASGLLNGSPLWKEVVTGGPLHGWAAIGTSSFEFTQFDNFMIEAKDPE.

An N-terminal signal peptide occupies residues 1-33; that stretch reads MGTVPAGSRRAPGCGEGMFILCLALLLAPGAPA. 3 residues coordinate substrate: Thr101, Trp143, and Asn189. The active-site Proton donor/acceptor is the Glu190. Residue Glu265 is the Nucleophile of the active site. A disulfide bond links Cys278 and Cys385. N-linked (GlcNAc...) asparagine glycosylation is found at Asn291, Asn370, and Asn381. Arg387 provides a ligand contact to substrate. N-linked (GlcNAc...) asparagine glycans are attached at residues Asn394, Asn399, Asn424, Asn441, Asn509, Asn549, and Asn630.

Belongs to the glycosyl hydrolase 59 family.

It is found in the lysosome. It carries out the reaction a beta-D-galactosyl-(1&lt;-&gt;1')-N-acylsphing-4-enine + H2O = an N-acylsphing-4-enine + D-galactose. The enzyme catalyses beta-D-galactosyl-(1&lt;-&gt;1)-sphing-4-enine + H2O = sphing-4-enine + D-galactose. It catalyses the reaction a D-galactosylceramide + H2O = an N-acyl-sphingoid base + D-galactose. Its function is as follows. Hydrolyzes the galactose ester bonds of glycolipids such as galactosylceramide and galactosylsphingosine. The protein is Galactocerebrosidase of Xenopus laevis (African clawed frog).